We begin with the raw amino-acid sequence, 463 residues long: tRNA modification GTPase MnmE (463 aa).

3 residues coordinate (6S)-5-formyl-5,6,7,8-tetrahydrofolate: Arg29, Glu91, and Arg130. A TrmE-type G domain is found at 225 to 384 (GLKVAIVGRP…LETAILEIVQ (160 aa)). Residue Asn235 coordinates K(+). GTP contacts are provided by residues 235–240 (NVGKSS), 254–260 (TDLPGTT), and 279–282 (DTAG). Ser239 serves as a coordination point for Mg(2+). Residues Thr254, Leu256, and Thr259 each coordinate K(+). Thr260 contacts Mg(2+). Lys463 lines the (6S)-5-formyl-5,6,7,8-tetrahydrofolate pocket.

This sequence belongs to the TRAFAC class TrmE-Era-EngA-EngB-Septin-like GTPase superfamily. TrmE GTPase family. As to quaternary structure, homodimer. Heterotetramer of two MnmE and two MnmG subunits. K(+) is required as a cofactor.

It localises to the cytoplasm. Functionally, exhibits a very high intrinsic GTPase hydrolysis rate. Involved in the addition of a carboxymethylaminomethyl (cmnm) group at the wobble position (U34) of certain tRNAs, forming tRNA-cmnm(5)s(2)U34. The protein is tRNA modification GTPase MnmE of Trichormus variabilis (strain ATCC 29413 / PCC 7937) (Anabaena variabilis).